The following is a 262-amino-acid chain: tRNA pseudouridine synthase A (262 aa).

D51 acts as the Nucleophile in catalysis. Position 109 (Y109) interacts with substrate.

The protein belongs to the tRNA pseudouridine synthase TruA family. Homodimer.

It catalyses the reaction uridine(38/39/40) in tRNA = pseudouridine(38/39/40) in tRNA. Its function is as follows. Formation of pseudouridine at positions 38, 39 and 40 in the anticodon stem and loop of transfer RNAs. This is tRNA pseudouridine synthase A from Actinobacillus pleuropneumoniae serotype 7 (strain AP76).